A 161-amino-acid polypeptide reads, in one-letter code: Disulfide bond formation protein B (161 aa).

The Cytoplasmic segment spans residues 1–8; sequence MQANSRAY. The helical transmembrane segment at 9 to 25 threads the bilayer; the sequence is FLLIAFISFGLVGFALY. Over 26–43 the chain is Periplasmic; it reads LQFEKGYQPCPLCIMQRF. Residues Cys35 and Cys38 are joined by a disulfide bond. Residues 44–58 traverse the membrane as a helical segment; it reads AFIGIGLFSLLAVIA. Topologically, residues 59 to 63 are cytoplasmic; the sequence is QNTRS. Residues 64 to 81 form a helical membrane-spanning segment; that stretch reads LWQGLGMLSGVGGIAVAV. Topologically, residues 82 to 136 are periplasmic; sequence YHVSLLLNPKASCGIDPLENWVNALPTAKVLPQVFYSDGLCTAPLPPVLGLSVPA. An intrachain disulfide couples Cys94 to Cys122. Residues 137 to 155 form a helical membrane-spanning segment; the sequence is WSLIWLFILTLTLAVGLIR. Residues 156–161 lie on the Cytoplasmic side of the membrane; that stretch reads REKNFR.

It belongs to the DsbB family.

Its subcellular location is the cell inner membrane. In terms of biological role, required for disulfide bond formation in some periplasmic proteins. Acts by oxidizing the DsbA protein. The sequence is that of Disulfide bond formation protein B from Cupriavidus pinatubonensis (strain JMP 134 / LMG 1197) (Cupriavidus necator (strain JMP 134)).